Consider the following 463-residue polypeptide: ATP-dependent protease ATPase subunit HslU (463 aa).

Residues Ile-19, 61–66 (GVGKTE), Asp-277, Glu-341, and Arg-413 each bind ATP.

It belongs to the ClpX chaperone family. HslU subfamily. A double ring-shaped homohexamer of HslV is capped on each side by a ring-shaped HslU homohexamer. The assembly of the HslU/HslV complex is dependent on binding of ATP.

The protein localises to the cytoplasm. In terms of biological role, ATPase subunit of a proteasome-like degradation complex; this subunit has chaperone activity. The binding of ATP and its subsequent hydrolysis by HslU are essential for unfolding of protein substrates subsequently hydrolyzed by HslV. HslU recognizes the N-terminal part of its protein substrates and unfolds these before they are guided to HslV for hydrolysis. The chain is ATP-dependent protease ATPase subunit HslU from Bacillus cereus (strain B4264).